The chain runs to 88 residues: Small ribosomal subunit protein uS17 (88 aa).

Belongs to the universal ribosomal protein uS17 family. As to quaternary structure, part of the 30S ribosomal subunit.

In terms of biological role, one of the primary rRNA binding proteins, it binds specifically to the 5'-end of 16S ribosomal RNA. The protein is Small ribosomal subunit protein uS17 of Prochlorococcus marinus (strain MIT 9312).